We begin with the raw amino-acid sequence, 596 residues long: Malto-oligosyltrehalose trehalohydrolase (596 aa).

263-268 (RLDAVH) lines the substrate pocket. The active-site Nucleophile is Asp-265. Residue Glu-302 is the Proton donor of the active site. Residues 327–331 (DDFHH) and 397–402 (HDQIGN) each bind substrate.

Belongs to the glycosyl hydrolase 13 family.

The protein localises to the cytoplasm. The catalysed reaction is hydrolysis of (1-&gt;4)-alpha-D-glucosidic linkage in 4-alpha-D-[(1-&gt;4)-alpha-D-glucanosyl]n trehalose to yield trehalose and (1-&gt;4)-alpha-D-glucan.. It participates in glycan biosynthesis; trehalose biosynthesis. This is Malto-oligosyltrehalose trehalohydrolase (treZ) from Rhizobium sp. (strain M-11).